Here is a 385-residue protein sequence, read N- to C-terminus: Polyketide synthase 4 (385 aa).

The active site involves Cys157.

This sequence belongs to the thiolase-like superfamily. Chalcone/stilbene synthases family. Expressed in glandular trichomes.

Its subcellular location is the cytoplasm. Its function is as follows. Polyketide synthase responsible for the biosynthesis of secondary metabolites. This Cannabis sativa (Hemp) protein is Polyketide synthase 4 (PKSG4).